The primary structure comprises 384 residues: Putative odorant receptor 98b (384 aa).

Over 1 to 34 (MLTDKFLRLQSALFRLLGLELLHEQDVGHRYPWR) the chain is Cytoplasmic. The chain crosses the membrane as a helical span at residues 35–55 (SICCILSVASFMPLTIAFGLQ). The Extracellular segment spans residues 56-66 (NVQNVEQLTDS). The chain crosses the membrane as a helical span at residues 67–87 (LCSVLVDLLALCKIGLFLWLY). The Cytoplasmic portion of the chain corresponds to 88–128 (KDFKFLIGQFYCVLQTETHTAVAEMIVTRESRRDQFISAMY). The helical transmembrane segment at 129 to 149 (AYCFITAGLSACLMSPLSMLI) threads the bilayer. Residues 150 to 177 (SYQRTGELQPKFPFPSVYPWDNMKLSNY) lie on the Extracellular side of the membrane. The helical transmembrane segment at 178-198 (IISYFWNVCAALGVALPTVCV) threads the bilayer. At 199 to 258 (DTLFCSLSHNLCALFQIARHKMMHFEGRNTKETHENLKHVFQLYALCLNLGHFLNEYFRP) the chain is on the cytoplasmic side. A helical transmembrane segment spans residues 259 to 279 (LICQFVAASLHLCVLCYQLSA). Topologically, residues 280–284 (NILQP) are extracellular. Residues 285-305 (ALLFYAAFTAAVVGQVSIYCF) form a helical membrane-spanning segment. The Cytoplasmic segment spans residues 306–329 (CGSSIHSECQLFGQAIYESSWPHL). The helical transmembrane segment at 330-350 (LQENLQLVSSLKIAMMRSSLG) threads the bilayer. Over 351–384 (CPIDGYFFEANRETLITVSKAFIKVSKKTPQVND) the chain is Extracellular.

This sequence belongs to the insect chemoreceptor superfamily. Heteromeric odorant receptor channel (TC 1.A.69) family. Or1a subfamily. Interacts with Orco. Complexes exist early in the endomembrane system in olfactory sensory neurons (OSNs), coupling these complexes to the conserved ciliary trafficking pathway.

The protein resides in the cell membrane. Odorant receptor which mediates acceptance or avoidance behavior, depending on its substrates. The odorant receptor repertoire encodes a large collection of odor stimuli that vary widely in identity, intensity, and duration. May form a complex with Orco to form odorant-sensing units, providing sensitive and prolonged odorant signaling and calcium permeability. The protein is Putative odorant receptor 98b (Or98b) of Drosophila melanogaster (Fruit fly).